The chain runs to 426 residues: UDP-N-acetylmuramoylalanine--D-glutamate ligase (426 aa).

G112–T118 is a binding site for ATP.

The protein belongs to the MurCDEF family.

The protein resides in the cytoplasm. The catalysed reaction is UDP-N-acetyl-alpha-D-muramoyl-L-alanine + D-glutamate + ATP = UDP-N-acetyl-alpha-D-muramoyl-L-alanyl-D-glutamate + ADP + phosphate + H(+). The protein operates within cell wall biogenesis; peptidoglycan biosynthesis. Its function is as follows. Cell wall formation. Catalyzes the addition of glutamate to the nucleotide precursor UDP-N-acetylmuramoyl-L-alanine (UMA). This Thermosipho melanesiensis (strain DSM 12029 / CIP 104789 / BI429) protein is UDP-N-acetylmuramoylalanine--D-glutamate ligase.